The following is an 87-amino-acid chain: uncharacterized protein (87 aa).

This is an uncharacterized protein from Bacillus subtilis (strain 168).